The following is a 37-amino-acid chain: Large ribosomal subunit protein bL36 (37 aa).

Belongs to the bacterial ribosomal protein bL36 family.

In Paracidovorax citrulli (strain AAC00-1) (Acidovorax citrulli), this protein is Large ribosomal subunit protein bL36.